A 1770-amino-acid polypeptide reads, in one-letter code: Transposon Ty2-OR1 Gag-Pol polyprotein (1770 aa).

Polar residues-rich tracts occupy residues 1 to 39 (MESQ…SASN) and 49 to 60 (KVNSQQETTPGT). Disordered stretches follow at residues 1–88 (MESQ…YQQH) and 359–449 (QHSE…SNDE). The RNA-binding stretch occupies residues 295 to 397 (ENNINVSDRL…SSKPRAAKAH (103 aa)). A compositionally biased stretch (low complexity) spans 369 to 381 (TSPNTTNTKVTTR). Composition is skewed to polar residues over residues 399–408 (IATSSKFSRV) and 415–435 (ESTV…GQQQ). Catalysis depends on Asp457, which acts as the For protease activity; shared with dimeric partner. Residues 579–636 (NVNKSKSVNKYPYPLIHRMLGHANFRSIQKSLKKNAVTYLKESDIEWSNASTYQCPDC) form an integrase-type zinc finger-like region. The 176-residue stretch at 656 to 831 (ESYEPFQYLH…AGLDITTILP (176 aa)) folds into the Integrase catalytic domain. Positions 667 and 732 each coordinate Mg(2+). Polar residues-rich tracts occupy residues 916–929 (FIEQ…YDQN), 1009–1024 (ESDT…FTAR), and 1065–1082 (QRNS…STPS). Disordered regions lie at residues 916 to 935 (FIEQ…SDHD), 1005 to 1038 (GGTI…MIDL), and 1057 to 1205 (GGTE…TEIE). Residues 1193–1227 (KKRSLEDNETEIEVSRDTWNNKNMRSLEPPRSKKR) carry the Bipartite nuclear localization signal motif. Residues 1353–1491 (NDYYITQLDI…DILGLEIKYQ (139 aa)) enclose the Reverse transcriptase Ty1/copia-type domain. 6 residues coordinate Mg(2+): Asp1361, Asp1442, Asp1443, Asp1625, Glu1667, and Asp1700. Residues 1625 to 1767 (DASYGNQPYY…IKTFKLLTNK (143 aa)) form the RNase H Ty1/copia-type domain.

The capsid protein forms a homotrimer, from which the VLPs are assembled. The protease is a homodimer, whose active site consists of two apposed aspartic acid residues. Post-translationally, initially, virus-like particles (VLPs) are composed of the structural unprocessed proteins Gag and Gag-Pol, and also contain the host initiator methionine tRNA (tRNA(i)-Met) which serves as a primer for minus-strand DNA synthesis, and a dimer of genomic Ty RNA. Processing of the polyproteins occurs within the particle and proceeds by an ordered pathway, called maturation. First, the protease (PR) is released by autocatalytic cleavage of the Gag-Pol polyprotein, and this cleavage is a prerequisite for subsequent processing at the remaining sites to release the mature structural and catalytic proteins. Maturation takes place prior to the RT reaction and is required to produce transposition-competent VLPs.

The protein resides in the cytoplasm. It localises to the nucleus. The enzyme catalyses DNA(n) + a 2'-deoxyribonucleoside 5'-triphosphate = DNA(n+1) + diphosphate. The catalysed reaction is Endonucleolytic cleavage to 5'-phosphomonoester.. Its function is as follows. Capsid protein (CA) is the structural component of the virus-like particle (VLP), forming the shell that encapsulates the retrotransposons dimeric RNA genome. The particles are assembled from trimer-clustered units and there are holes in the capsid shells that allow for the diffusion of macromolecules. CA also has nucleocapsid-like chaperone activity, promoting primer tRNA(i)-Met annealing to the multipartite primer-binding site (PBS), dimerization of Ty2 RNA and initiation of reverse transcription. The aspartyl protease (PR) mediates the proteolytic cleavages of the Gag and Gag-Pol polyproteins after assembly of the VLP. In terms of biological role, reverse transcriptase/ribonuclease H (RT) is a multifunctional enzyme that catalyzes the conversion of the retro-elements RNA genome into dsDNA within the VLP. The enzyme displays a DNA polymerase activity that can copy either DNA or RNA templates, and a ribonuclease H (RNase H) activity that cleaves the RNA strand of RNA-DNA heteroduplexes during plus-strand synthesis and hydrolyzes RNA primers. The conversion leads to a linear dsDNA copy of the retrotransposon that includes long terminal repeats (LTRs) at both ends. Functionally, integrase (IN) targets the VLP to the nucleus, where a subparticle preintegration complex (PIC) containing at least integrase and the newly synthesized dsDNA copy of the retrotransposon must transit the nuclear membrane. Once in the nucleus, integrase performs the integration of the dsDNA into the host genome. The protein is Transposon Ty2-OR1 Gag-Pol polyprotein (TY2B-OR1) of Saccharomyces cerevisiae (strain ATCC 204508 / S288c) (Baker's yeast).